The primary structure comprises 309 residues: Acetylglutamate kinase (309 aa).

Substrate is bound by residues 82 to 83 (GG), R104, and N206.

Belongs to the acetylglutamate kinase family. ArgB subfamily.

Its subcellular location is the cytoplasm. The enzyme catalyses N-acetyl-L-glutamate + ATP = N-acetyl-L-glutamyl 5-phosphate + ADP. It participates in amino-acid biosynthesis; L-arginine biosynthesis; N(2)-acetyl-L-ornithine from L-glutamate: step 2/4. Catalyzes the ATP-dependent phosphorylation of N-acetyl-L-glutamate. The protein is Acetylglutamate kinase of Cupriavidus metallidurans (strain ATCC 43123 / DSM 2839 / NBRC 102507 / CH34) (Ralstonia metallidurans).